Consider the following 592-residue polypeptide: Bifunctional purine biosynthesis protein ATIC (592 aa).

M1 is subject to N-acetylmethionine. One can recognise an MGS-like domain in the interval 1-146; it reads MAPGHLALFS…KNHARVTVVC (146 aa). The interval 1 to 198 is IMP cyclohydrolase; it reads MAPGHLALFS…ISDYFRKQYS (198 aa). Residues 12-14, 34-37, 64-67, 101-102, and 125-126 contribute to the IMP site; these read SDK, SGGT, RVKT, CN, and DI. K137 (proton donor/acceptor; for FAICAR cyclization activity) is an active-site residue. At K199 the chain carries N6-acetyllysine. The AICAR formyltransferase stretch occupies residues 199-592; it reads KGISQMPLRY…AHTNLRLFHH (394 aa). Residues 207–208, H267, G316, D339, N431, and R451 each bind 5-amino-1-(5-phospho-beta-D-ribosyl)imidazole-4-carboxamide; that span reads RY. Catalysis depends on H267, which acts as the Proton acceptor; for AICAR formyltransferase activity. I452 is a binding site for (6R)-10-formyltetrahydrofolate. Position 541 (F541) interacts with 5-amino-1-(5-phospho-beta-D-ribosyl)imidazole-4-carboxamide. (6R)-10-formyltetrahydrofolate-binding positions include D546 and 565–566; that span reads SA. Residue R588 coordinates 5-amino-1-(5-phospho-beta-D-ribosyl)imidazole-4-carboxamide.

Belongs to the PurH family. As to quaternary structure, homodimer. Associates with internalized INSR complexes on Golgi/endosomal membranes. Interacts with INSR; ATIC together with PRKAA2/AMPK2 and HACD3/PTPLAD1 is proposed to be part of a signaling network regulating INSR autophosphorylation and endocytosis.

It is found in the cytoplasm. The protein resides in the cytosol. The enzyme catalyses (6R)-10-formyltetrahydrofolate + 5-amino-1-(5-phospho-beta-D-ribosyl)imidazole-4-carboxamide = 5-formamido-1-(5-phospho-D-ribosyl)imidazole-4-carboxamide + (6S)-5,6,7,8-tetrahydrofolate. It carries out the reaction 10-formyldihydrofolate + 5-amino-1-(5-phospho-beta-D-ribosyl)imidazole-4-carboxamide = 5-formamido-1-(5-phospho-D-ribosyl)imidazole-4-carboxamide + 7,8-dihydrofolate. It catalyses the reaction IMP + H2O = 5-formamido-1-(5-phospho-D-ribosyl)imidazole-4-carboxamide. Its pathway is purine metabolism; IMP biosynthesis via de novo pathway; 5-formamido-1-(5-phospho-D-ribosyl)imidazole-4-carboxamide from 5-amino-1-(5-phospho-D-ribosyl)imidazole-4-carboxamide (10-formyl THF route): step 1/1. The protein operates within purine metabolism; IMP biosynthesis via de novo pathway; IMP from 5-formamido-1-(5-phospho-D-ribosyl)imidazole-4-carboxamide: step 1/1. Its activity is regulated as follows. AMP and XMP inhibit AICAR formyltransferase activity. In terms of biological role, bifunctional enzyme that catalyzes the last two steps of purine biosynthesis. Acts as a transformylase that incorporates a formyl group to the AMP analog AICAR (5-amino-1-(5-phospho-beta-D-ribosyl)imidazole-4-carboxamide) to produce the intermediate formyl-AICAR (FAICAR). Can use both 10-formyldihydrofolate and 10-formyltetrahydrofolate as the formyl donor in this reaction. Also catalyzes the cyclization of FAICAR to inosine monophosphate (IMP). Promotes insulin receptor/INSR autophosphorylation and is involved in INSR internalization. This Pongo abelii (Sumatran orangutan) protein is Bifunctional purine biosynthesis protein ATIC (ATIC).